The primary structure comprises 121 residues: RxLR effector protein PexRD2 (121 aa).

A signal peptide spans 1–18 (MRLSYVFVVFAASLLVTA). The RxLR-dEER motif lies at 38–56 (RLLRKHYTAAENDGDSEAR). Positions 57 to 121 (ALNPEKMKTM…LNYVAEHTAV (65 aa)) are WY domain.

It belongs to the RxLR effector family.

It is found in the secreted. The protein localises to the host cytoplasm. The protein resides in the host nucleus. In terms of biological role, secreted effector involved in P.mirabilis colonization of host plants. May perturb the signaling of cell death associated with plant immunity, via interaction with a host MAP kinase. The sequence is that of RxLR effector protein PexRD2 from Phytophthora mirabilis.